The following is a 158-amino-acid chain: SsrA-binding protein (158 aa).

Belongs to the SmpB family.

It localises to the cytoplasm. Required for rescue of stalled ribosomes mediated by trans-translation. Binds to transfer-messenger RNA (tmRNA), required for stable association of tmRNA with ribosomes. tmRNA and SmpB together mimic tRNA shape, replacing the anticodon stem-loop with SmpB. tmRNA is encoded by the ssrA gene; the 2 termini fold to resemble tRNA(Ala) and it encodes a 'tag peptide', a short internal open reading frame. During trans-translation Ala-aminoacylated tmRNA acts like a tRNA, entering the A-site of stalled ribosomes, displacing the stalled mRNA. The ribosome then switches to translate the ORF on the tmRNA; the nascent peptide is terminated with the 'tag peptide' encoded by the tmRNA and targeted for degradation. The ribosome is freed to recommence translation, which seems to be the essential function of trans-translation. This is SsrA-binding protein from Hydrogenovibrio crunogenus (strain DSM 25203 / XCL-2) (Thiomicrospira crunogena).